The chain runs to 552 residues: Putative lipase ATG15 (552 aa).

The Cytoplasmic portion of the chain corresponds to methionine 1 to proline 26. A helical; Signal-anchor for type II membrane protein membrane pass occupies residues leucine 27–leucine 49. The Lumenal segment spans residues arginine 50–glutamate 552. 5 N-linked (GlcNAc...) asparagine glycosylation sites follow: asparagine 63, asparagine 147, asparagine 239, asparagine 307, and asparagine 391. The active-site Charge relay system is the serine 409. Residue asparagine 526 is glycosylated (N-linked (GlcNAc...) asparagine).

It belongs to the AB hydrolase superfamily. Lipase family. Binds to both phosphatidylinositol (PI) and phosphatidylinositol 3,5-bisphosphate (PIP2).

It localises to the endosome. The protein resides in the multivesicular body membrane. It is found in the prevacuolar compartment membrane. The enzyme catalyses a triacylglycerol + H2O = a diacylglycerol + a fatty acid + H(+). Lipase which is essential for lysis of subvacuolar cytoplasm to vacuole targeted bodies and intravacuolar autophagic bodies. Involved in the lysis of intravacuolar multivesicular body (MVB) vesicles. The intravacuolar membrane disintegration by ATG15 is critical to life span extension. The protein is Putative lipase ATG15 (ATG15) of Lodderomyces elongisporus (strain ATCC 11503 / CBS 2605 / JCM 1781 / NBRC 1676 / NRRL YB-4239) (Yeast).